The following is an 83-amino-acid chain: Small ribosomal subunit protein uS17c (83 aa).

Belongs to the universal ribosomal protein uS17 family. In terms of assembly, part of the 30S ribosomal subunit.

Its subcellular location is the plastid. It is found in the chloroplast. One of the primary rRNA binding proteins, it binds specifically to the 5'-end of 16S ribosomal RNA. This is Small ribosomal subunit protein uS17c (rps17) from Pyropia yezoensis (Susabi-nori).